The chain runs to 234 residues: Ubiquitin domain-containing protein 1 (234 aa).

Residues 1 to 47 form a disordered region; it reads MGGCVGTHHDSSGSLNENSDGTGVALGRNQPLKKDKPKWKSDYPMTD. A compositionally biased stretch (polar residues) spans 12-21; sequence SGSLNENSDG. The segment covering 32-41 has biased composition (basic and acidic residues); that stretch reads LKKDKPKWKS. A Ubiquitin-like domain is found at 152–227; it reads CQLRLRLSTG…VQVIVSQPIP (76 aa).

In terms of biological role, may be involved in the regulation of cellular senescence through a positive feedback loop with TP53. The protein is Ubiquitin domain-containing protein 1 (ubtd1) of Xenopus laevis (African clawed frog).